The chain runs to 198 residues: Peptidyl-tRNA hydrolase (198 aa).

Position 15 (tyrosine 15) interacts with tRNA. Histidine 20 acts as the Proton acceptor in catalysis. TRNA is bound by residues phenylalanine 66, asparagine 68, and asparagine 114.

It belongs to the PTH family. In terms of assembly, monomer.

Its subcellular location is the cytoplasm. It carries out the reaction an N-acyl-L-alpha-aminoacyl-tRNA + H2O = an N-acyl-L-amino acid + a tRNA + H(+). In terms of biological role, hydrolyzes ribosome-free peptidyl-tRNAs (with 1 or more amino acids incorporated), which drop off the ribosome during protein synthesis, or as a result of ribosome stalling. Its function is as follows. Catalyzes the release of premature peptidyl moieties from peptidyl-tRNA molecules trapped in stalled 50S ribosomal subunits, and thus maintains levels of free tRNAs and 50S ribosomes. This chain is Peptidyl-tRNA hydrolase, found in Cupriavidus metallidurans (strain ATCC 43123 / DSM 2839 / NBRC 102507 / CH34) (Ralstonia metallidurans).